We begin with the raw amino-acid sequence, 538 residues long: SWM histone demethylase complex subunit phf2 (538 aa).

3 disordered regions span residues 28 to 47 (RFPN…NQNG), 98 to 150 (EIES…SSPL), and 198 to 222 (TKSG…RRRG). A compositionally biased stretch (basic and acidic residues) spans 98–111 (EIESSKNQETDAKS). The segment at 232-288 (AMKCSVCQRLQSPPKNRIVFCDGCNTPFHQLCHEPYISDELLDSPNGEWFCDDCIRR) adopts a PHD-type zinc-finger fold. Polar residues predominate over residues 367–392 (GDQYLSLNNGTESQSKTTKHSTSLPS). The segment at 367–396 (GDQYLSLNNGTESQSKTTKHSTSLPSTEPV) is disordered.

Component of the SWM histone demethylase complex composed of at least lsd1, lsd2, phf1 and phf2.

The protein resides in the nucleus. In terms of biological role, component of the SWM histone demethylase complex that specifically demethylates H3K9me2, a specific tag for epigenetic transcriptional activation, thereby acting as a corepressor. Has a role in regulating heterochromatin propagation and euchromatic transcription. The chain is SWM histone demethylase complex subunit phf2 (phf2) from Schizosaccharomyces pombe (strain 972 / ATCC 24843) (Fission yeast).